We begin with the raw amino-acid sequence, 145 residues long: Hemoglobin subunit beta-2 (145 aa).

The Globin domain occupies 2–145 (HLTAEDRKEI…GVSHALGHGY (144 aa)). Residues H63 and H92 each contribute to the heme b site.

Belongs to the globin family. As to quaternary structure, minor hemoglobin is a tetramer of two alpha-2 chains and two beta-2 chains. As to expression, red blood cells.

Its function is as follows. Involved in oxygen transport from the lung to the various peripheral tissues. This chain is Hemoglobin subunit beta-2 (HBB2), found in Triturus cristatus (Great crested newt).